A 440-amino-acid polypeptide reads, in one-letter code: NK1 transcription factor-related protein 1 (440 aa).

Residues 1 to 13 (MSTSGPAAPGDVP) show a composition bias toward low complexity. 3 disordered regions span residues 1–82 (MSTS…RPTS), 145–291 (GVAA…PRRA), and 342–387 (KWKK…PMGA). A compositionally biased stretch (pro residues) spans 14–31 (ALPPPPPGPGSGPAPPAP). Low complexity-rich tracts occupy residues 62 to 74 (VPAVPEGAGAARP) and 145 to 158 (GVAAAAGAEPTSAG). Polar residues predominate over residues 170 to 181 (GYSSGSGRSPTA). Residues 182–198 (DSEDEAPEDEDEEEAPE) are compositionally biased toward acidic residues. The span at 210-222 (GGSGGLGARGSGC) shows a compositional bias: gly residues. Over residues 237 to 269 (AAPGPRGNSPGAPGPPATATGAGSAGSTPQGAA) the composition is skewed to low complexity. The segment at residues 288–347 (PRRARTAFTYEQLVALENKFKATRYLSVCERLNLALSLSLTETQVKIWFQNRRTKWKKQN) is a DNA-binding region (homeobox). A compositionally biased stretch (gly residues) spans 356-374 (TGGGGGPGPGAGPGAGLPG).

This sequence belongs to the NK-1 homeobox family.

It localises to the nucleus. In terms of biological role, may be required for the coordinated crosstalk of factors involved in the maintenance of energy homeostasis, possibly by regulating the transcription of specific factors involved in energy balance. The polypeptide is NK1 transcription factor-related protein 1 (Mus musculus (Mouse)).